The sequence spans 175 residues: Large ribosomal subunit protein bL17 (175 aa).

The segment at 124-175 is disordered; the sequence is VKKSKPTAPAQAVATKPAVEETREAAAAQPQEPEVEISEVKDPAEECEAKAD. A compositionally biased stretch (basic and acidic residues) spans 161-175; that stretch reads SEVKDPAEECEAKAD.

The protein belongs to the bacterial ribosomal protein bL17 family. In terms of assembly, part of the 50S ribosomal subunit. Contacts protein L32.

This chain is Large ribosomal subunit protein bL17, found in Geobacter sulfurreducens (strain ATCC 51573 / DSM 12127 / PCA).